Consider the following 333-residue polypeptide: Tryptophan--tRNA ligase (333 aa).

ATP contacts are provided by residues 9–11 (QPT) and 17–18 (GN). Residues 10 to 18 (PTNNLTLGN) carry the 'HIGH' region motif. An L-tryptophan-binding site is contributed by aspartate 140. ATP is bound by residues 152-154 (GQD), isoleucine 191, and 200-204 (KMSKS). The 'KMSKS' region signature appears at 200–204 (KMSKS).

Belongs to the class-I aminoacyl-tRNA synthetase family. In terms of assembly, homodimer.

The protein resides in the cytoplasm. The catalysed reaction is tRNA(Trp) + L-tryptophan + ATP = L-tryptophyl-tRNA(Trp) + AMP + diphosphate + H(+). Its function is as follows. Catalyzes the attachment of tryptophan to tRNA(Trp). The sequence is that of Tryptophan--tRNA ligase from Ureaplasma parvum serovar 3 (strain ATCC 700970).